The following is a 147-amino-acid chain: Interleukin-4 (147 aa).

The N-terminal stretch at 1 to 24 is a signal peptide; sequence MGLPAQLPVTLLCLLAGTAHFIQG. Cysteines 48 and 88 form a disulfide. Asn-62 is a glycosylation site (N-linked (GlcNAc...) asparagine).

Belongs to the IL-4/IL-13 family.

It localises to the secreted. Participates in at least several B-cell activation processes as well as of other cell types. It is a costimulator of DNA-synthesis. It induces the expression of class II MHC molecules on resting B-cells. It enhances both secretion and cell surface expression of IgE and IgG1. It also regulates the expression of the low affinity Fc receptor for IgE (CD23) on both lymphocytes and monocytes. Positively regulates IL31RA expression in macrophages. Stimulates autophagy in dendritic cells by interfering with mTORC1 signaling and through the induction of RUFY4. The polypeptide is Interleukin-4 (IL4) (Oryctolagus cuniculus (Rabbit)).